The following is a 614-amino-acid chain: Dihydroxy-acid dehydratase (614 aa).

Asp-81 contributes to the Mg(2+) binding site. Residue Cys-122 coordinates [2Fe-2S] cluster. 2 residues coordinate Mg(2+): Asp-123 and Lys-124. Position 124 is an N6-carboxylysine (Lys-124). Cys-193 contributes to the [2Fe-2S] cluster binding site. Glu-489 contributes to the Mg(2+) binding site. Catalysis depends on Ser-515, which acts as the Proton acceptor.

The protein belongs to the IlvD/Edd family. Homodimer. It depends on [2Fe-2S] cluster as a cofactor. Mg(2+) is required as a cofactor.

The enzyme catalyses (2R)-2,3-dihydroxy-3-methylbutanoate = 3-methyl-2-oxobutanoate + H2O. It catalyses the reaction (2R,3R)-2,3-dihydroxy-3-methylpentanoate = (S)-3-methyl-2-oxopentanoate + H2O. Its pathway is amino-acid biosynthesis; L-isoleucine biosynthesis; L-isoleucine from 2-oxobutanoate: step 3/4. It participates in amino-acid biosynthesis; L-valine biosynthesis; L-valine from pyruvate: step 3/4. Its function is as follows. Functions in the biosynthesis of branched-chain amino acids. Catalyzes the dehydration of (2R,3R)-2,3-dihydroxy-3-methylpentanoate (2,3-dihydroxy-3-methylvalerate) into 2-oxo-3-methylpentanoate (2-oxo-3-methylvalerate) and of (2R)-2,3-dihydroxy-3-methylbutanoate (2,3-dihydroxyisovalerate) into 2-oxo-3-methylbutanoate (2-oxoisovalerate), the penultimate precursor to L-isoleucine and L-valine, respectively. This Cellvibrio japonicus (strain Ueda107) (Pseudomonas fluorescens subsp. cellulosa) protein is Dihydroxy-acid dehydratase.